Reading from the N-terminus, the 354-residue chain is 5,10-methenyltetrahydromethanopterin hydrogenase (354 aa).

Belongs to the HMD family.

The enzyme catalyses 5,10-methenyl-5,6,7,8-tetrahydromethanopterin + H2 = 5,10-methylenetetrahydromethanopterin + H(+). Its pathway is one-carbon metabolism; methanogenesis from CO(2); 5,10-methylene-5,6,7,8-tetrahydromethanopterin from 5,10-methenyl-5,6,7,8-tetrahydromethanopterin (hydrogen route): step 1/1. Its function is as follows. Catalyzes the reversible reduction of methenyl-H(4)MPT(+) to methylene-H(4)MPT. This is 5,10-methenyltetrahydromethanopterin hydrogenase from Methanococcus maripaludis (strain DSM 14266 / JCM 13030 / NBRC 101832 / S2 / LL).